The following is a 314-amino-acid chain: Methionyl-tRNA formyltransferase (314 aa).

110 to 113 is a binding site for (6S)-5,6,7,8-tetrahydrofolate; that stretch reads SLLP.

This sequence belongs to the Fmt family.

It catalyses the reaction L-methionyl-tRNA(fMet) + (6R)-10-formyltetrahydrofolate = N-formyl-L-methionyl-tRNA(fMet) + (6S)-5,6,7,8-tetrahydrofolate + H(+). In terms of biological role, attaches a formyl group to the free amino group of methionyl-tRNA(fMet). The formyl group appears to play a dual role in the initiator identity of N-formylmethionyl-tRNA by promoting its recognition by IF2 and preventing the misappropriation of this tRNA by the elongation apparatus. This chain is Methionyl-tRNA formyltransferase, found in Bacillus cereus (strain G9842).